The primary structure comprises 190 residues: Vespryn-21 (190 aa).

The first 20 residues, 1–20 (MLLFTLCFFADLENGGKALA), serve as a signal peptide directing secretion. The 107-residue stretch at 21-127 (SPPGKWQKAD…LIWQRGLWFL (107 aa)) folds into the B30.2/SPRY domain. Positions 128–190 (QRLETDSDKL…LGGGVSLTNL (63 aa)) are excised as a propeptide.

Belongs to the ohanin/vespryn family. Expressed by the venom gland.

The protein localises to the secreted. Neurotoxin that produces dose-dependent hypolocomotion and hyperalgesia in mice. May directly act on the central nervous system, as it is 6500-fold more potent when administered intracerebroventricularly than intraperitoneal. This Drysdalia coronoides (White-lipped snake) protein is Vespryn-21.